The sequence spans 465 residues: Iron-sulfur cluster assembly SufBD family protein SAR0880 (465 aa).

The protein belongs to the iron-sulfur cluster assembly SufBD family.

The sequence is that of Iron-sulfur cluster assembly SufBD family protein SAR0880 from Staphylococcus aureus (strain MRSA252).